The chain runs to 386 residues: O-phospho-L-seryl-tRNA:Cys-tRNA synthase (386 aa).

Pyridoxal 5'-phosphate contacts are provided by residues 89-90 (AR), Asn196, and 219-221 (SGH). The residue at position 222 (Lys222) is an N6-(pyridoxal phosphate)lysine.

The protein belongs to the SepCysS family. Homodimer. Interacts with SepRS. The cofactor is pyridoxal 5'-phosphate.

It catalyses the reaction O-phospho-L-seryl-tRNA(Cys) + hydrogen sulfide + H(+) = L-cysteinyl-tRNA(Cys) + phosphate. Converts O-phospho-L-seryl-tRNA(Cys) (Sep-tRNA(Cys)) to L-cysteinyl-tRNA(Cys) (Cys-tRNA(Cys)). This chain is O-phospho-L-seryl-tRNA:Cys-tRNA synthase, found in Methanosarcina mazei (strain ATCC BAA-159 / DSM 3647 / Goe1 / Go1 / JCM 11833 / OCM 88) (Methanosarcina frisia).